Here is a 149-residue protein sequence, read N- to C-terminus: UPF0178 protein HEAR0259 (149 aa).

The protein belongs to the UPF0178 family.

This chain is UPF0178 protein HEAR0259, found in Herminiimonas arsenicoxydans.